The primary structure comprises 291 residues: Protease HtpX homolog (291 aa).

A run of 2 helical transmembrane segments spans residues 4–24 (ILLF…VASL) and 39–59 (GSLL…SLLI). Position 144 (His144) interacts with Zn(2+). Residue Glu145 is part of the active site. His148 contributes to the Zn(2+) binding site. 2 helical membrane-spanning segments follow: residues 159-179 (LIQG…AFAI) and 199-219 (ITTV…VAWF). Glu224 lines the Zn(2+) pocket.

This sequence belongs to the peptidase M48B family. It depends on Zn(2+) as a cofactor.

Its subcellular location is the cell inner membrane. The polypeptide is Protease HtpX homolog (Albidiferax ferrireducens (strain ATCC BAA-621 / DSM 15236 / T118) (Rhodoferax ferrireducens)).